A 485-amino-acid chain; its full sequence is N-succinylglutamate 5-semialdehyde dehydrogenase (485 aa).

220-225 (GSANTG) serves as a coordination point for NAD(+). Active-site residues include Glu243 and Cys278.

Belongs to the aldehyde dehydrogenase family. AstD subfamily.

The catalysed reaction is N-succinyl-L-glutamate 5-semialdehyde + NAD(+) + H2O = N-succinyl-L-glutamate + NADH + 2 H(+). Its pathway is amino-acid degradation; L-arginine degradation via AST pathway; L-glutamate and succinate from L-arginine: step 4/5. Functionally, catalyzes the NAD-dependent reduction of succinylglutamate semialdehyde into succinylglutamate. This chain is N-succinylglutamate 5-semialdehyde dehydrogenase, found in Vibrio campbellii (strain ATCC BAA-1116).